We begin with the raw amino-acid sequence, 331 residues long: Probable cyclic nucleotide synthase IK1_05630 (331 aa).

The protein belongs to the CD-NTase family. D12 subfamily.

Its function is as follows. Cyclic nucleotide synthase (second messenger synthase) of a CBASS antivirus system. CBASS (cyclic oligonucleotide-based antiphage signaling system) provides immunity against bacteriophage. The CD-NTase protein synthesizes cyclic nucleotides in response to infection; these serve as specific second messenger signals. The signals activate a diverse range of effectors, leading to bacterial cell death and thus abortive phage infection. A type I-B CBASS system. Probably a cyclic nucleotide synthase that makes second messenger nucleotide which activates a CBASS antiviral defense system. In terms of biological role, protects B.subtilis against phage infection. When IK1_05630 and IK1_05631 are introduced in B.subtilis BEST7003 there is 1000-fold protection against phage SBSphiC. Both genes are required for protection. Activation leads to bacterial cell lysis and death, which occurs before the phage has finished its replication cycle, thus protecting non-infected bacteria by aborting the phage infection and preventing its propagation. The protein is Probable cyclic nucleotide synthase IK1_05630 of Bacillus cereus (strain VD146).